Consider the following 484-residue polypeptide: MVENQKAMPQPEMRRIRRIHFVGIGGVGMCGIAEVLLNLGYQVSGSDLKASPVTERLESFGAQIFIGHRAENAANADVLVVSSAVNTSNPEVATALERRIPVVPRAEMLAELMRYRHGVAVAGTHGKTTTTSLLASVFAAGGLDPTFVIGGRLNAAGTNAQLGTSRYLIAEADESDASFLHLQPLVAVVTNIDADHMATYDGDFNKLKKTFVDFLHNLPFYGLAVMCLDDPVVREILPQVKRPTVTYGFSEEADVRAINVRQQGMQTFFTVLRRDREPLDVSVNMPGNHNVLNSLATICIATDEGISDEAIVQGLSGFQGVGRRFQVYGELPVEGGNVMLVDDYGHHPTEVAAVIKAVRGGWPERRLVMVYQPHRFSRTRDLYDDFVQVLADANVLLLMEVYPAGEEPIPGADSRQLCHSIRQRGQLDPIYIERGVDLAPLVKPLLRAGDILLCQGAGDIGGLAPKLLGSPLFAGAVAAGKGAK.

123 to 129 (GTHGKTT) is an ATP binding site.

This sequence belongs to the MurCDEF family.

It localises to the cytoplasm. It carries out the reaction UDP-N-acetyl-alpha-D-muramate + L-alanine + ATP = UDP-N-acetyl-alpha-D-muramoyl-L-alanine + ADP + phosphate + H(+). It functions in the pathway cell wall biogenesis; peptidoglycan biosynthesis. Cell wall formation. This is UDP-N-acetylmuramate--L-alanine ligase from Pseudomonas fluorescens (strain ATCC BAA-477 / NRRL B-23932 / Pf-5).